The following is a 493-amino-acid chain: Cytoplasmic tRNA 2-thiolation protein 2 (493 aa).

Position 489 is a phosphoserine (Ser489).

The protein belongs to the CTU2/NCS2 family. As to quaternary structure, interacts with NCS6 and URM1. May act by forming a heterodimer with NCS6.

Its subcellular location is the cytoplasm. It functions in the pathway tRNA modification; 5-methoxycarbonylmethyl-2-thiouridine-tRNA biosynthesis. Plays a central role in 2-thiolation of mcm(5)S(2)U at tRNA wobble positions of tRNA(Lys), tRNA(Glu) and tRNA(Gln). May act by forming a heterodimer with NCS6 that ligates sulfur from thiocarboxylated URM1 onto the uridine of tRNAs at wobble position. Prior mcm(5) tRNA modification by the elongator complex is required for 2-thiolation. May also be involved in protein urmylation. This Saccharomyces cerevisiae (strain YJM789) (Baker's yeast) protein is Cytoplasmic tRNA 2-thiolation protein 2.